Here is a 379-residue protein sequence, read N- to C-terminus: Tryptophan 2,3-dioxygenase (379 aa).

Substrate is bound by residues Phe57–His61 and Arg128. Residue His312 participates in heme binding. Position 327 (Thr327) interacts with substrate.

This sequence belongs to the tryptophan 2,3-dioxygenase family. Homotetramer. Dimer of dimers. It depends on heme as a cofactor.

The catalysed reaction is L-tryptophan + O2 = N-formyl-L-kynurenine. It participates in amino-acid degradation; L-tryptophan degradation via kynurenine pathway; L-kynurenine from L-tryptophan: step 1/2. It functions in the pathway pigment biosynthesis; ommochrome biosynthesis. In terms of biological role, heme-dependent dioxygenase that catalyzes the oxidative cleavage of the L-tryptophan (L-Trp) pyrrole ring and converts L-tryptophan to N-formyl-L-kynurenine. Catalyzes the oxidative cleavage of the indole moiety. Required during larval growth to control the level of potentially harmful free tryptophan in the hemolymph. In the adult the same reaction is the first step in the ommochrome biosynthetic pathway. In Drosophila melanogaster (Fruit fly), this protein is Tryptophan 2,3-dioxygenase.